Reading from the N-terminus, the 725-residue chain is Gamma-tubulin complex component 5 (725 aa).

Positions 222–246 (TENEEKMSDNASASSGSDQGPSSRQ) are disordered. Residues 232–244 (ASASSGSDQGPSS) show a composition bias toward low complexity.

The protein belongs to the TUBGCP family. As to quaternary structure, component of the gamma-tubulin ring complex (gTuRC) consisting of TUBGCP2, TUBGCP3, TUBGCP4, TUBGCP5 and TUBGCP6 and gamma-tubulin TUBG1 or TUBG2. TUBGCP2, TUBGCP3, TUBGCP4, TUBGCP5 and TUBGCP6 assemble in a 5:5:2:1:1 stoichiometry; each is associated with a gamma-tubulin, thereby arranging 14 gamma-tubulins in a helical manner. Gamma-tubulin at the first position is blocked by TUBGCP3 at the last position, allowing 13 protafilaments to grow into a microtubule. The gTuRC (via TUBGCP3 and TUBGCP6) interacts with ACTB and MZT1; the interactions form a luminal bridge that stabilizes the initial structure during complex assembly. The gTuRC (via TUBGCP2) interacts with MZT2A/MZT2B and CDK5RAP2 (via CM1 motif); the interactions play a role in gTuRC activation.

Its subcellular location is the cytoplasm. The protein localises to the cytoskeleton. The protein resides in the microtubule organizing center. It localises to the centrosome. Component of the gamma-tubulin ring complex (gTuRC) which mediates microtubule nucleation. The gTuRC regulates the minus-end nucleation of alpha-beta tubulin heterodimers that grow into microtubule protafilaments, a critical step in centrosome duplication and spindle formation. The protein is Gamma-tubulin complex component 5 (TUBGCP5) of Macaca fascicularis (Crab-eating macaque).